The primary structure comprises 128 residues: Gastrotropin (128 aa).

Position 2 is an N-acetylalanine (alanine 2).

Belongs to the calycin superfamily. Fatty-acid binding protein (FABP) family.

It localises to the cytoplasm. It is found in the membrane. Binds to bile acids and is involved in enterohepatic bile acid metabolism. Required for efficient apical to basolateral transport of conjugated bile acids in ileal enterocytes. Stimulates gastric acid and pepsinogen secretion. This chain is Gastrotropin (FABP6), found in Bos taurus (Bovine).